The chain runs to 546 residues: Probable Xaa-Pro aminopeptidase pepP (546 aa).

Residues aspartate 341, aspartate 352, glutamate 475, and glutamate 515 each contribute to the Mn(2+) site.

Belongs to the peptidase M24B family. Requires Mn(2+) as cofactor.

The catalysed reaction is Release of any N-terminal amino acid, including proline, that is linked to proline, even from a dipeptide or tripeptide.. Functionally, catalyzes the removal of a penultimate prolyl residue from the N-termini of peptides. The polypeptide is Probable Xaa-Pro aminopeptidase pepP (pepP) (Sclerotinia sclerotiorum (strain ATCC 18683 / 1980 / Ss-1) (White mold)).